Here is a 465-residue protein sequence, read N- to C-terminus: MTSEADDTIAAIASPMTPAPRGIVRLSGHDCIDVLCRMKVLDTDEASGRRPFRSSKTLSLGEPLGAIEVDVMVWPTQRSYTGQPSAELHLIGSAPLLQSSLDAAIRAGARAARPGEFTMRSFLAGRLDLTQAEAVLGVIEAEDRGTLDQALSQLAGNLSRPLQAARSTLLDLLADVEAGLDFVDEDIEFISDEALIQRLDELRSLLLQTRSQLSDRGGASSTIRVVLRGLPNAGKSRLLNVLSRTESAIVTDQAGTTRDLVTVESSWGGHSFQLIDTAGSESREESDPEAPISQEAQLQAAEAARGADVHVWCIDATGGDGFESLKSPNAVLAEAKRSAQLICVATKRDLMPTDWNGESMRADLAVSSESGTGVDSLIERLVQFAEQRDAGETGSVIGTAARCQDSLAAAIEHLAQAIQWTEQAAGHELVAAEMRLAVEAIGEVTGQVYTDDILDRVFGRFCIGK.

3 residues coordinate (6S)-5-formyl-5,6,7,8-tetrahydrofolate: Arg-25, Glu-87, and Arg-126. The 165-residue stretch at 222–386 folds into the TrmE-type G domain; it reads TIRVVLRGLP…LIERLVQFAE (165 aa). GTP is bound by residues 232–237, 251–257, and 276–279; these read NAGKSR, TDQAGTT, and DTAG. Mg(2+) is bound by residues Ser-236 and Thr-257. Residue Lys-465 participates in (6S)-5-formyl-5,6,7,8-tetrahydrofolate binding.

The protein belongs to the TRAFAC class TrmE-Era-EngA-EngB-Septin-like GTPase superfamily. TrmE GTPase family. As to quaternary structure, homodimer. Heterotetramer of two MnmE and two MnmG subunits. It depends on K(+) as a cofactor.

The protein localises to the cytoplasm. Functionally, exhibits a very high intrinsic GTPase hydrolysis rate. Involved in the addition of a carboxymethylaminomethyl (cmnm) group at the wobble position (U34) of certain tRNAs, forming tRNA-cmnm(5)s(2)U34. This is tRNA modification GTPase MnmE from Rhodopirellula baltica (strain DSM 10527 / NCIMB 13988 / SH1).